Consider the following 228-residue polypeptide: Protein slowmo homolog (228 aa).

Positions 1-172 (MPLFETIKHT…TIIKVQKEAE (172 aa)) constitute a PRELI/MSF1 domain.

This sequence belongs to the slowmo family.

The protein is Protein slowmo homolog (slmo) of Dictyostelium discoideum (Social amoeba).